Consider the following 390-residue polypeptide: tRNA (guanine(26)-N(2))-dimethyltransferase (390 aa).

The region spanning 4-378 (HIIEEGLVKI…MPLDELKQLI (375 aa)) is the Trm1 methyltransferase domain. Residues arginine 37, arginine 67, aspartate 85, aspartate 112, and alanine 113 each coordinate S-adenosyl-L-methionine. Positions 245, 248, 265, and 268 each coordinate Zn(2+).

It belongs to the class I-like SAM-binding methyltransferase superfamily. Trm1 family.

It carries out the reaction guanosine(26) in tRNA + 2 S-adenosyl-L-methionine = N(2)-dimethylguanosine(26) in tRNA + 2 S-adenosyl-L-homocysteine + 2 H(+). Dimethylates a single guanine residue at position 26 of a number of tRNAs using S-adenosyl-L-methionine as donor of the methyl groups. The polypeptide is tRNA (guanine(26)-N(2))-dimethyltransferase (Methanosphaera stadtmanae (strain ATCC 43021 / DSM 3091 / JCM 11832 / MCB-3)).